The primary structure comprises 546 residues: Beta-amylase (546 aa).

The N-terminal stretch at 1-30 (MKNQFQYCCIVILSVVMLFVSLLIPQASSA) is a signal peptide. Residue aspartate 79 coordinates substrate. The Ca(2+) site is built by glutamate 86, aspartate 90, and glutamine 91. 2 residues coordinate substrate: histidine 119 and aspartate 127. The cysteines at positions 121 and 129 are disulfide-linked. 2 residues coordinate Ca(2+): glutamate 171 and glutamate 174. Glutamate 202 (proton donor) is an active-site residue. Residues lysine 317, histidine 322, and threonine 360 each coordinate substrate. Glutamate 397 acts as the Proton acceptor in catalysis. Substrate is bound by residues 398–399 (NA) and arginine 427. The 103-residue stretch at 444–546 (LLGVTPVMQT…LKTTSHTSSW (103 aa)) folds into the CBM20 domain.

Belongs to the glycosyl hydrolase 14 family. In terms of assembly, monomer. Ca(2+) is required as a cofactor.

It catalyses the reaction Hydrolysis of (1-&gt;4)-alpha-D-glucosidic linkages in polysaccharides so as to remove successive maltose units from the non-reducing ends of the chains.. The sequence is that of Beta-amylase (spoII) from Bacillus cereus.